The primary structure comprises 155 residues: Transcriptional repressor NrdR (155 aa).

Residues 3–34 (CPKCDHNGTRVLDSRPVQDHYSIRRRRECEKC) fold into a zinc finger. One can recognise an ATP-cone domain in the interval 49-139 (LIIVKKDGNR…VYRQFKDITV (91 aa)).

Belongs to the NrdR family. Requires Zn(2+) as cofactor.

Negatively regulates transcription of bacterial ribonucleotide reductase nrd genes and operons by binding to NrdR-boxes. This is Transcriptional repressor NrdR from Exiguobacterium sp. (strain ATCC BAA-1283 / AT1b).